A 194-amino-acid polypeptide reads, in one-letter code: Type II secretion system protein H (194 aa).

The propeptide at 1–6 (MTATRG) is leader sequence. An N-methylphenylalanine modification is found at F7. The chain crosses the membrane as a helical span at residues 12–32 (ILLVLVLVSASAVAVIATFPV).

It belongs to the GSP H family. In terms of assembly, type II secretion is composed of four main components: the outer membrane complex, the inner membrane complex, the cytoplasmic secretion ATPase and the periplasm-spanning pseudopilus. Interacts with core component EpsG. Post-translationally, cleaved by prepilin peptidase. Methylated by prepilin peptidase at the amino group of the N-terminal phenylalanine once the leader sequence is cleaved by prepilin peptidase.

Its subcellular location is the cell inner membrane. Component of the type II secretion system required for the energy-dependent secretion of extracellular factors such as proteases and toxins from the periplasm. Part of the pseudopilus tip complex that is critical for the recognition and binding of secretion substrates. In Vibrio cholerae serotype O1 (strain ATCC 39315 / El Tor Inaba N16961), this protein is Type II secretion system protein H (epsH).